The sequence spans 934 residues: Protocadherin gamma-C3 (934 aa).

An N-terminal signal peptide occupies residues 1 to 31 (MVPEAWRSGLVSTGRVVGVLLLLGALNKAST). Cadherin domains follow at residues 32–135 (VIHY…NPAF), 136–244 (PTQE…APVF), 245–352 (NQSL…APEI), 353–457 (TVTS…PPQS), 458–567 (SQSS…APQV), and 572–685 (PGGS…APRE). The Extracellular portion of the chain corresponds to 32-693 (VIHYEIPEER…REQNKNLTFY (662 aa)). 6 N-linked (GlcNAc...) asparagine glycosylation sites follow: Asn245, Asn424, Asn478, Asn550, Asn615, and Asn689. A helical membrane pass occupies residues 694 to 714 (LLLSLILVSVGFVVTVFGVII). Over 715-934 (FKVYKWKQSR…KKKSGKKEKK (220 aa)) the chain is Cytoplasmic. 2 disordered regions span residues 804 to 843 (ESAP…WPNN) and 904 to 934 (ATLT…KEKK). Residues 812–843 (APPNTDWRFSQAQRPGTSGSQNGDDTGTWPNN) are compositionally biased toward polar residues. Positions 924 to 934 (NKKKSGKKEKK) are enriched in basic residues.

The protein resides in the cell membrane. Its function is as follows. Potential calcium-dependent cell-adhesion protein. May be involved in the establishment and maintenance of specific neuronal connections in the brain. This chain is Protocadherin gamma-C3 (PCDHGC3), found in Pan troglodytes (Chimpanzee).